The chain runs to 690 residues: Rho guanine nucleotide exchange factor 4 (690 aa).

The interval 73-126 (KTQRKKLQKQAHVERRLHIGAVHKDGVKCWRKTIITSPESLNLPRRSHPLSQSA) is ABR (APC-binding region) domain. A disordered region spans residues 113-145 (LNLPRRSHPLSQSAPTGLNHMGWPEHTPGTAMP). The 60-residue stretch at 194–253 (GSVVCAEALWDHVTMDDQELGFKAGDVIEVMDATNREWWWGRVADGEGWFPASFVRLRVN) folds into the SH3 domain. A disordered region spans residues 257–282 (PADDDAPLAGNSGAEDGGAEAQSSKD). A DH domain is found at 284–468 (MRTNVINEIL…KNVAQLINER (185 aa)). Positions 499–606 (ELIYSGELTR…WLKAFARERE (108 aa)) constitute a PH domain.

In terms of assembly, isoform 3 interacts with RHOA and RAC1, and (via ABR domain) with APC. Found in a complex consisting of ARHGEF4, APC and CTNNB1. As to expression, expressed at high levels in the brain, skeletal muscle and testis and at low levels in the kidney, lung, small intestine, ovary and prostate. Expression is aberrantly enhanced in most colorectal tumors.

It is found in the cytoplasm. Its subcellular location is the cell projection. The protein resides in the ruffle membrane. Acts as a guanine nucleotide exchange factor (GEF) for RHOA, RAC1 and CDC42 GTPases. Binding of APC may activate RAC1 GEF activity. The APC-ARHGEF4 complex seems to be involved in cell migration as well as in E-cadherin-mediated cell-cell adhesion. Required for MMP9 up-regulation via the JNK signaling pathway in colorectal tumor cells. Involved in tumor angiogenesis and may play a role in intestinal adenoma formation and tumor progression. This chain is Rho guanine nucleotide exchange factor 4 (ARHGEF4), found in Homo sapiens (Human).